Consider the following 328-residue polypeptide: MQSAQKSKTNGDTSLFLMKDIPQYWSPALKIGSGAFGEVMLVHSDRLDARGEQILHNEFALKVIRFPECDYHKIIREVNTHTLCRHHDNVLFIGSIYCQTFQQGLRVQMCLEYAALSDLSLLASSETFESHVAYICKNLISALIHIHNLGIVHGDLSVKNILMTHEGVVKLSDFGMANTFEQTRKSKNQSILGTPGFIAPEIINLQGYDGKADLWGLGILSLFLLKGENPFKKCTQFDLESYKVSISESFYPDYSNYSTPLQEFMSSLKDYNPEFRSSALHASSQTYLKTSCSQSEILNYYKRLRRTRGMDLPWPEEIHTFSVPVSLE.

Positions 25–288 constitute a Protein kinase domain; it reads WSPALKIGSG…ALHASSQTYL (264 aa). Residues 31–39 and lysine 62 each bind ATP; that span reads IGSGAFGEV. The Proton acceptor role is filled by aspartate 155.

This sequence belongs to the protein kinase superfamily. Tyr protein kinase family.

The enzyme catalyses L-tyrosyl-[protein] + ATP = O-phospho-L-tyrosyl-[protein] + ADP + H(+). The polypeptide is Putative tyrosine-protein kinase C03B1.5 (Caenorhabditis elegans).